Reading from the N-terminus, the 93-residue chain is Integration host factor subunit beta (93 aa).

The protein belongs to the bacterial histone-like protein family. Heterodimer of an alpha and a beta chain.

This protein is one of the two subunits of integration host factor, a specific DNA-binding protein that functions in genetic recombination as well as in transcriptional and translational control. The sequence is that of Integration host factor subunit beta from Cereibacter sphaeroides (strain KD131 / KCTC 12085) (Rhodobacter sphaeroides).